The primary structure comprises 307 residues: D-alanine--D-alanine ligase (307 aa).

The region spanning 101–301 is the ATP-grasp domain; sequence KTVMRAAGVS…FGELVRWMVE (201 aa). 127–182 contributes to the ATP binding site; sequence PLTPPYVVKPIAEGSSMGVIIVREERSHPPQILASDEWVYGEEVLAETYIAGRELT. Positions 251, 268, and 270 each coordinate Mg(2+).

This sequence belongs to the D-alanine--D-alanine ligase family. It depends on Mg(2+) as a cofactor. Mn(2+) serves as cofactor.

It localises to the cytoplasm. The catalysed reaction is 2 D-alanine + ATP = D-alanyl-D-alanine + ADP + phosphate + H(+). Its pathway is cell wall biogenesis; peptidoglycan biosynthesis. Cell wall formation. The sequence is that of D-alanine--D-alanine ligase from Methylorubrum populi (strain ATCC BAA-705 / NCIMB 13946 / BJ001) (Methylobacterium populi).